The primary structure comprises 508 residues: Histidine ammonia-lyase (508 aa).

A cross-link (5-imidazolinone (Ala-Gly)) is located at residues 143 to 145 (ASG). Ser-144 is modified (2,3-didehydroalanine (Ser)).

Belongs to the PAL/histidase family. Contains an active site 4-methylidene-imidazol-5-one (MIO), which is formed autocatalytically by cyclization and dehydration of residues Ala-Ser-Gly.

The protein resides in the cytoplasm. It catalyses the reaction L-histidine = trans-urocanate + NH4(+). The protein operates within amino-acid degradation; L-histidine degradation into L-glutamate; N-formimidoyl-L-glutamate from L-histidine: step 1/3. This is Histidine ammonia-lyase from Caldanaerobacter subterraneus subsp. tengcongensis (strain DSM 15242 / JCM 11007 / NBRC 100824 / MB4) (Thermoanaerobacter tengcongensis).